The following is a 431-amino-acid chain: Glutamate-1-semialdehyde 2,1-aminomutase (431 aa).

Residue lysine 269 is modified to N6-(pyridoxal phosphate)lysine.

It belongs to the class-III pyridoxal-phosphate-dependent aminotransferase family. HemL subfamily. As to quaternary structure, homodimer. The cofactor is pyridoxal 5'-phosphate.

It localises to the cytoplasm. The enzyme catalyses (S)-4-amino-5-oxopentanoate = 5-aminolevulinate. It participates in porphyrin-containing compound metabolism; protoporphyrin-IX biosynthesis; 5-aminolevulinate from L-glutamyl-tRNA(Glu): step 2/2. In Francisella tularensis subsp. holarctica (strain FTNF002-00 / FTA), this protein is Glutamate-1-semialdehyde 2,1-aminomutase.